Here is a 202-residue protein sequence, read N- to C-terminus: Probable nicotinate-nucleotide adenylyltransferase (202 aa).

Belongs to the NadD family.

The catalysed reaction is nicotinate beta-D-ribonucleotide + ATP + H(+) = deamido-NAD(+) + diphosphate. Its pathway is cofactor biosynthesis; NAD(+) biosynthesis; deamido-NAD(+) from nicotinate D-ribonucleotide: step 1/1. Functionally, catalyzes the reversible adenylation of nicotinate mononucleotide (NaMN) to nicotinic acid adenine dinucleotide (NaAD). The sequence is that of Probable nicotinate-nucleotide adenylyltransferase from Synechococcus sp. (strain JA-2-3B'a(2-13)) (Cyanobacteria bacterium Yellowstone B-Prime).